Consider the following 272-residue polypeptide: Alcohol dehydrogenase-related 31 kDa protein (272 aa).

11-34 (YVADCGGIALETSKVLMTKNIAKL) provides a ligand contact to NAD(+). Ser139 is a substrate binding site. Catalysis depends on Tyr152, which acts as the Proton acceptor.

Belongs to the short-chain dehydrogenases/reductases (SDR) family.

The polypeptide is Alcohol dehydrogenase-related 31 kDa protein (Adhr) (Drosophila mauritiana (Fruit fly)).